A 604-amino-acid chain; its full sequence is Glutamine--fructose-6-phosphate aminotransferase [isomerizing] (604 aa).

The active-site Nucleophile; for GATase activity is Cys2. Residues 2–219 (CGIMGAVSER…EGDSACVTTQ (218 aa)) enclose the Glutamine amidotransferase type-2 domain. 2 consecutive SIS domains span residues 279–427 (LRAS…DNRA) and 454–594 (LASL…VDQP). Catalysis depends on Lys599, which acts as the For Fru-6P isomerization activity.

In terms of assembly, homodimer.

The protein localises to the cytoplasm. It catalyses the reaction D-fructose 6-phosphate + L-glutamine = D-glucosamine 6-phosphate + L-glutamate. Catalyzes the first step in hexosamine metabolism, converting fructose-6P into glucosamine-6P using glutamine as a nitrogen source. This is Glutamine--fructose-6-phosphate aminotransferase [isomerizing] from Legionella pneumophila subsp. pneumophila (strain Philadelphia 1 / ATCC 33152 / DSM 7513).